A 124-amino-acid polypeptide reads, in one-letter code: UPF0102 protein Blon_1698/BLIJ_1758 (124 aa).

This sequence belongs to the UPF0102 family.

The protein is UPF0102 protein Blon_1698/BLIJ_1758 of Bifidobacterium longum subsp. infantis (strain ATCC 15697 / DSM 20088 / JCM 1222 / NCTC 11817 / S12).